Reading from the N-terminus, the 227-residue chain is Ubiquitin-conjugating enzyme E2 6 (227 aa).

Residues 1 to 206 (MASKGAYKRL…NSKQSWVKSR (206 aa)) lie on the Cytoplasmic side of the membrane. The UBC core domain occupies 5 to 163 (GAYKRLMKEY…FPELIDKNRE (159 aa)). Cys87 (glycyl thioester intermediate) is an active-site residue. The helical transmembrane segment at 207-225 (WSIAVLVFFALALARFFGA) threads the bilayer.

This sequence belongs to the ubiquitin-conjugating enzyme family.

It localises to the endoplasmic reticulum membrane. The enzyme catalyses S-ubiquitinyl-[E1 ubiquitin-activating enzyme]-L-cysteine + [E2 ubiquitin-conjugating enzyme]-L-cysteine = [E1 ubiquitin-activating enzyme]-L-cysteine + S-ubiquitinyl-[E2 ubiquitin-conjugating enzyme]-L-cysteine.. It participates in protein modification; protein ubiquitination. Its function is as follows. Catalyzes the covalent attachment of ubiquitin to other proteins. Functions in degradation of misfolded or regulated proteins localized in the endoplasmic reticulum (ER) lumen or membrane via the ubiquitin-proteasome system. Cognate E2 conjugating enzyme for the doa10 ubiquitin ligase complex, which is part of the ERAD-C pathway responsible for the rapid degradation of membrane proteins with misfolded cytoplasmic domains. This Schizosaccharomyces pombe (strain 972 / ATCC 24843) (Fission yeast) protein is Ubiquitin-conjugating enzyme E2 6 (ubc6).